The chain runs to 495 residues: Glutamyl-tRNA(Gln) amidotransferase subunit A (495 aa).

Active-site charge relay system residues include Lys78 and Ser158. Ser182 acts as the Acyl-ester intermediate in catalysis.

It belongs to the amidase family. GatA subfamily. Heterotrimer of A, B and C subunits.

It carries out the reaction L-glutamyl-tRNA(Gln) + L-glutamine + ATP + H2O = L-glutaminyl-tRNA(Gln) + L-glutamate + ADP + phosphate + H(+). Functionally, allows the formation of correctly charged Gln-tRNA(Gln) through the transamidation of misacylated Glu-tRNA(Gln) in organisms which lack glutaminyl-tRNA synthetase. The reaction takes place in the presence of glutamine and ATP through an activated gamma-phospho-Glu-tRNA(Gln). In Dinoroseobacter shibae (strain DSM 16493 / NCIMB 14021 / DFL 12), this protein is Glutamyl-tRNA(Gln) amidotransferase subunit A.